The following is a 35-amino-acid chain: MRRVKLLCTALMLLASHGALAVSYPLPPEGSRLVG.

Residues 1-21 (MRRVKLLCTALMLLASHGALA) form the signal peptide.

It belongs to the YkuD family.

Its subcellular location is the periplasm. It functions in the pathway cell wall biogenesis; peptidoglycan biosynthesis. In Klebsiella aerogenes (Enterobacter aerogenes), this protein is Probable L,D-transpeptidase ErfK/SrfK (erfK).